We begin with the raw amino-acid sequence, 234 residues long: 1-(5-phosphoribosyl)-5-[(5-phosphoribosylamino)methylideneamino] imidazole-4-carboxamide isomerase (234 aa).

Aspartate 9 serves as the catalytic Proton acceptor. Catalysis depends on aspartate 131, which acts as the Proton donor.

It belongs to the HisA/HisF family.

It localises to the cytoplasm. It carries out the reaction 1-(5-phospho-beta-D-ribosyl)-5-[(5-phospho-beta-D-ribosylamino)methylideneamino]imidazole-4-carboxamide = 5-[(5-phospho-1-deoxy-D-ribulos-1-ylimino)methylamino]-1-(5-phospho-beta-D-ribosyl)imidazole-4-carboxamide. Its pathway is amino-acid biosynthesis; L-histidine biosynthesis; L-histidine from 5-phospho-alpha-D-ribose 1-diphosphate: step 4/9. This chain is 1-(5-phosphoribosyl)-5-[(5-phosphoribosylamino)methylideneamino] imidazole-4-carboxamide isomerase, found in Staphylococcus aureus (strain bovine RF122 / ET3-1).